A 184-amino-acid chain; its full sequence is Holliday junction branch migration complex subunit RuvA (184 aa).

Residues 1–64 form a domain I region; the sequence is MIKAIEGIIT…EDANLLYGFI (64 aa). Positions 65–137 are domain II; it reads KESEQRIFEM…LSDAKFGEIN (73 aa). A region of interest (flexible linker) is located at residue N137. The tract at residues 138 to 184 is domain III; it reads SMPSYQNEAFMALESLGFKRDRISKVLNECSSNDTASLIKEALKKLA.

Belongs to the RuvA family. As to quaternary structure, homotetramer. Forms an RuvA(8)-RuvB(12)-Holliday junction (HJ) complex. HJ DNA is sandwiched between 2 RuvA tetramers; dsDNA enters through RuvA and exits via RuvB. An RuvB hexamer assembles on each DNA strand where it exits the tetramer. Each RuvB hexamer is contacted by two RuvA subunits (via domain III) on 2 adjacent RuvB subunits; this complex drives branch migration. In the full resolvosome a probable DNA-RuvA(4)-RuvB(12)-RuvC(2) complex forms which resolves the HJ.

The protein localises to the cytoplasm. Functionally, the RuvA-RuvB-RuvC complex processes Holliday junction (HJ) DNA during genetic recombination and DNA repair, while the RuvA-RuvB complex plays an important role in the rescue of blocked DNA replication forks via replication fork reversal (RFR). RuvA specifically binds to HJ cruciform DNA, conferring on it an open structure. The RuvB hexamer acts as an ATP-dependent pump, pulling dsDNA into and through the RuvAB complex. HJ branch migration allows RuvC to scan DNA until it finds its consensus sequence, where it cleaves and resolves the cruciform DNA. This Campylobacter fetus subsp. fetus (strain 82-40) protein is Holliday junction branch migration complex subunit RuvA.